Consider the following 88-residue polypeptide: Small ribosomal subunit protein uS15 (88 aa).

It belongs to the universal ribosomal protein uS15 family. In terms of assembly, part of the 30S ribosomal subunit. Forms a bridge to the 50S subunit in the 70S ribosome, contacting the 23S rRNA.

One of the primary rRNA binding proteins, it binds directly to 16S rRNA where it helps nucleate assembly of the platform of the 30S subunit by binding and bridging several RNA helices of the 16S rRNA. Functionally, forms an intersubunit bridge (bridge B4) with the 23S rRNA of the 50S subunit in the ribosome. The sequence is that of Small ribosomal subunit protein uS15 from Flavobacterium psychrophilum (strain ATCC 49511 / DSM 21280 / CIP 103535 / JIP02/86).